Reading from the N-terminus, the 207-residue chain is Segregation and condensation protein B (207 aa).

The segment at 173-207 (DDTAESDNDSADLYYRQFEQTLNETGPETAPKGEQ) is disordered.

The protein belongs to the ScpB family. As to quaternary structure, homodimer. Homodimerization may be required to stabilize the binding of ScpA to the Smc head domains. Component of a cohesin-like complex composed of ScpA, ScpB and the Smc homodimer, in which ScpA and ScpB bind to the head domain of Smc. The presence of the three proteins is required for the association of the complex with DNA.

It localises to the cytoplasm. In terms of biological role, participates in chromosomal partition during cell division. May act via the formation of a condensin-like complex containing Smc and ScpA that pull DNA away from mid-cell into both cell halves. The chain is Segregation and condensation protein B from Latilactobacillus sakei subsp. sakei (strain 23K) (Lactobacillus sakei subsp. sakei).